The primary structure comprises 104 residues: Small ribosomal subunit protein uS10 (104 aa).

This sequence belongs to the universal ribosomal protein uS10 family. Part of the 30S ribosomal subunit.

In terms of biological role, involved in the binding of tRNA to the ribosomes. This is Small ribosomal subunit protein uS10 from Maricaulis maris (strain MCS10) (Caulobacter maris).